Reading from the N-terminus, the 93-residue chain is HIG1 domain family member 1A, mitochondrial (93 aa).

The HIG1 domain maps to 1 to 93 (MSTDTGVSLP…YREFWAKPKP (93 aa)). S2 is modified (N-acetylserine). Position 8 is a phosphoserine (S8). The next 2 helical transmembrane spans lie at 26–46 (EAPF…YGLY) and 60–80 (LIHM…VGMG).

As to quaternary structure, associates with cytochrome c oxidase (COX, complex IV); proposed complex component. Also associates with respiratory chain supercomplexes.

The protein resides in the mitochondrion membrane. Its subcellular location is the mitochondrion inner membrane. In terms of biological role, proposed subunit of cytochrome c oxidase (COX, complex IV), which is the terminal component of the mitochondrial respiratory chain that catalyzes the reduction of oxygen to water. May play a role in the assembly of respiratory supercomplexes. The sequence is that of HIG1 domain family member 1A, mitochondrial (HIGD1A) from Homo sapiens (Human).